A 497-amino-acid chain; its full sequence is Early growth response protein 1-A (497 aa).

Low complexity predominate over residues 139–165 (SPSSAPSSSPSSSSSSSSSQSPPLSCS). Disordered regions lie at residues 139–169 (SPSS…VQSN), 175–194 (YSAA…DHSP), and 286–309 (PSRM…YGCP). C2H2-type zinc fingers lie at residues 306–330 (YGCP…IRIH), 336–358 (FQCR…IRTH), and 364–386 (FACD…TKIH). The segment at 377–441 (DERKRHTKIH…SYPSPVHSSF (65 aa)) is disordered. The segment covering 381 to 391 (RHTKIHLRQKD) has biased composition (basic residues). A compositionally biased stretch (low complexity) spans 397-441 (ATPVSVASPVSSYSPSASTSYPSPVPTSYSSPVSSSYPSPVHSSF).

The protein belongs to the EGR C2H2-type zinc-finger protein family. In terms of tissue distribution, expressed in the presumptive mesoderm. In blastula embryos, expressed in the dorsal marginal zone, and at the onset of gastrulation expression is specific to the Spemann organizer. As gastrulation proceeds, expressed in a ring around the yolk plug. This expression is maintained in advanced gastrulae, with weak expression also extending into the dorsal midline. By the neurula stage, expression is excluded from the notochord. In late tailbud stages, expressed in two spots in the anterior forebrain, which are connected via a bridge of cells that also show expression.

It localises to the nucleus. It is found in the cytoplasm. Its function is as follows. Transcriptional regulator. Recognizes and binds to the DNA sequence 5'-GCG(T/G)GGGCG-3'(EGR-site) in the promoter region of target genes. Binds double-stranded target DNA, irrespective of the cytosine methylation status. Regulates the transcription of numerous target genes, and thereby plays an important role in regulating the response to growth factors, DNA damage, and ischemia. Plays a role in the regulation of cell survival, proliferation and cell death. Mediates responses to ischemia and hypoxia; regulates the expression of proteins that are involved in inflammatory processes. Plays a role in regulating the expression of circadian clock genes. The polypeptide is Early growth response protein 1-A (egr1-a) (Xenopus laevis (African clawed frog)).